A 421-amino-acid polypeptide reads, in one-letter code: 5-hydroxytryptamine receptor 1A (421 aa).

At 1 to 38 (MDMFSLGQGNNTTTSLEPFGTGGNDTGLSNVTFSYQVI) the chain is on the extracellular side. N-linked (GlcNAc...) asparagine glycosylation is found at Asn10, Asn11, Asn24, and Asn30. A helical membrane pass occupies residues 39-59 (TSLLLGTLIFCAVLGNACVVA). The Cytoplasmic segment spans residues 60–73 (AIALERSLQNVANY). The helical transmembrane segment at 74–98 (LIGSLAVTDLMVSVLVLPMAALYQV) threads the bilayer. Topologically, residues 99–107 (LNKWTLGQV) are extracellular. The chain crosses the membrane as a helical span at residues 108–132 (TCDLFIALDVLCCTSSILHLCAIAL). Cysteines 109 and 187 form a disulfide. Serotonin is bound by residues Asp116 and Cys120. Residues 133–135 (DRY) carry the DRY motif; important for ligand-induced conformation changes motif. Residues 133–152 (DRYWAITDPIDYVNKRTPRR) lie on the Cytoplasmic side of the membrane. A helical transmembrane segment spans residues 153–174 (AAALISLTWLIGFLISIPPMLG). Residues 175–193 (WRTPEDRSNPNECTISKDH) are Extracellular-facing. The helical transmembrane segment at 194–216 (GYTIYSTFGAFYIPLLLMLVLYG) threads the bilayer. At 217 to 346 (RIFRAARFRI…LARERKTVKT (130 aa)) the chain is on the cytoplasmic side. The disordered stretch occupies residues 237–268 (GAGTSFGTSSAPPPKKSLNGQPGSGDCRRSAE). The 1D-myo-inositol 4-phosphate site is built by Thr314, Lys345, Thr346, and Gly352. Residues 347–370 (LGIIMGTFILCWLPFFIVALVLPF) traverse the membrane as a helical segment. Topologically, residues 371-378 (CESSCHMP) are extracellular. The chain crosses the membrane as a helical span at residues 379 to 403 (ELLGAIINWLGYSNSLLNPVIYAYF). The NPxxY motif; important for ligand-induced conformation changes and signaling signature appears at 396–400 (NPVIY). The 1D-myo-inositol 4-phosphate site is built by Phe403, Asn404, and Lys405. Residues 404-421 (NKDFQNAFKKIIKCKFCR) are Cytoplasmic-facing.

It belongs to the G-protein coupled receptor 1 family. 5-hydroxytryptamine receptor subfamily. HTR1A sub-subfamily. In terms of assembly, heterodimer; heterodimerizes with GPER1. Interacts with YIF1B. Interacts with GPR39 and GALR1. Most abundantly expressed in midbrain, in dorsal raphe and hippocampus. Detected at lower levels in amygdala and brain cortex.

The protein resides in the cell membrane. It is found in the cell projection. It localises to the dendrite. With respect to regulation, G-protein coupled receptor activity is regulated by lipids: phosphatidylinositol 4-phosphate increases HTR1A-mediated activity. Plays a role in the regulation of dopamine and 5-hydroxytryptamine levels in the brain, and thereby affects neural activity, mood and behavior. Plays a role in the response to anxiogenic stimuli. Its function is as follows. G-protein coupled receptor for 5-hydroxytryptamine (serotonin). Also functions as a receptor for various drugs and psychoactive substances. Ligand binding causes a conformation change that triggers signaling via guanine nucleotide-binding proteins (G proteins) and modulates the activity of downstream effectors, such as adenylate cyclase. HTR1A is coupled to G(i)/G(o) G alpha proteins and mediates inhibitory neurotransmission: signaling inhibits adenylate cyclase activity and activates a phosphatidylinositol-calcium second messenger system that regulates the release of Ca(2+) ions from intracellular stores. Beta-arrestin family members regulate signaling by mediating both receptor desensitization and resensitization processes. In Mus musculus (Mouse), this protein is 5-hydroxytryptamine receptor 1A (Htr1a).